The following is a 103-amino-acid chain: Large ribosomal subunit protein bL21 (103 aa).

This sequence belongs to the bacterial ribosomal protein bL21 family. As to quaternary structure, part of the 50S ribosomal subunit. Contacts protein L20.

Functionally, this protein binds to 23S rRNA in the presence of protein L20. In Ralstonia pickettii (strain 12J), this protein is Large ribosomal subunit protein bL21.